Here is a 159-residue protein sequence, read N- to C-terminus: GDP-mannose mannosyl hydrolase (159 aa).

Substrate-binding positions include 2-3 (FL), Phe-8, and Arg-36. One can recognise a Nudix hydrolase domain in the interval 13–153 (RSTPLVSLDF…SRAYFLAEKR (141 aa)). Gly-49, Glu-69, and Gln-122 together coordinate Mg(2+). Residues 50–71 (GRVQKDETLEAAFERLTMAELG) carry the Nudix box motif.

Homodimer. Requires Mg(2+) as cofactor.

It carries out the reaction GDP-alpha-D-mannose + H2O = D-mannose + GDP + H(+). Functionally, hydrolyzes both GDP-mannose and GDP-glucose. Could participate in the regulation of cell wall biosynthesis by influencing the concentration of GDP-mannose or GDP-glucose in the cell. Might also be involved in the biosynthesis of the slime polysaccharide colanic acid. This is GDP-mannose mannosyl hydrolase from Escherichia coli (strain K12).